Consider the following 351-residue polypeptide: DNA polymerase IV (351 aa).

The region spanning 4–185 (IIHVDMDCFF…LPLAKIPGVG (182 aa)) is the UmuC domain. 2 residues coordinate Mg(2+): Asp-8 and Asp-103. Glu-104 is an active-site residue.

The protein belongs to the DNA polymerase type-Y family. As to quaternary structure, monomer. It depends on Mg(2+) as a cofactor.

The protein localises to the cytoplasm. It carries out the reaction DNA(n) + a 2'-deoxyribonucleoside 5'-triphosphate = DNA(n+1) + diphosphate. Its function is as follows. Poorly processive, error-prone DNA polymerase involved in untargeted mutagenesis. Copies undamaged DNA at stalled replication forks, which arise in vivo from mismatched or misaligned primer ends. These misaligned primers can be extended by PolIV. Exhibits no 3'-5' exonuclease (proofreading) activity. May be involved in translesional synthesis, in conjunction with the beta clamp from PolIII. The chain is DNA polymerase IV from Escherichia coli O9:H4 (strain HS).